The primary structure comprises 238 residues: Thrombin-like enzyme collinein-1 (238 aa).

The region spanning 1-229 is the Peptidase S1 domain; the sequence is VIGGDECNIN…HLDWIQNIIA (229 aa). Cystine bridges form between Cys-7/Cys-141, Cys-28/Cys-44, Cys-78/Cys-236, Cys-120/Cys-190, Cys-152/Cys-169, and Cys-180/Cys-205. Catalysis depends on charge relay system residues His-43 and Asp-88. Catalysis depends on Ser-184, which acts as the Charge relay system.

It belongs to the peptidase S1 family. Snake venom subfamily. As to quaternary structure, monomer. In terms of tissue distribution, expressed by the venom gland.

The protein localises to the secreted. With respect to regulation, inhibited by Cu(2+) and, to a lesser extent, by Zn(2+) and Ba(2+). Not inhibited by Ca(2+) and Mg(2+). In terms of biological role, thrombin-like snake venom serine protease. Releases fibrinopeptide A and B in the conversion of fibrinogen to fibrin, with preferential activity on the alpha chain of fibrinogen. Also hydrolyzes N-p-toluensulfonyl arginine ester (TAME) and chromogenic artificial substrates of the blood coagulation cascade: S-2222 for factor Xa, S-2302 for kallikrein and S-2238 for thrombin. When tested in vitro, the recombinant protein does not degrade blood clots, suggesting that this toxin lacks fibrinolytic activity. In addition, it moderately inhibits human Kv10.1/KCNH1/EAG1 currents, with a mechanism independent of its enzymatic activity. It selectively blocks Kv10.1/KCNH1/EAG1 in a time and dose-dependent manner (IC(50)=4.2 uM for native protein and IC(50)=2.5 uM for recombinant protein). It may have a preference in interacting with Kv10.1/KCNH1/EAG1 in its closed state, since the inhibitory effect of the toxin is decreased at more depolarized potentials. Corroboratively, it may have possible antitumor applications, since it reduces the viability of human breast cancer cell line MCF-7, which strongly expresses Kv10.1/KCNH1/EAG1, but does not affect the liver carcinoma and the non-tumorigenic epithelial breast cell lines, which weakly express Kv10.1/KCNH1/EAG1. When tested on peripheral blood mononuclear cells (PBMC), the native protein shows mild cytotoxicity, whereas the recombinant protein does not show any cytotoxicity. Native form is not immununogenic, since it does not induce statistically significant antibody production in mice, whereas recombinant form shows an antibody titer slightly higher than the native form. In vivo, subplantar injection in mice paw induces a discreet paw edema. In addition, intraperitoneal injection of the recombinant protein into mice led to fibrinogen depletion, resulting in the blood incoagulability. The chain is Thrombin-like enzyme collinein-1 from Crotalus durissus collilineatus (Brazilian rattlesnake).